Reading from the N-terminus, the 355-residue chain is UDP-N-acetylglucosamine--N-acetylmuramyl-(pentapeptide) pyrophosphoryl-undecaprenol N-acetylglucosamine transferase (355 aa).

UDP-N-acetyl-alpha-D-glucosamine-binding positions include 13 to 15 (TGG), Asn125, Arg162, Ser190, Ile244, and Gln289.

The protein belongs to the glycosyltransferase 28 family. MurG subfamily.

The protein resides in the cell inner membrane. The catalysed reaction is di-trans,octa-cis-undecaprenyl diphospho-N-acetyl-alpha-D-muramoyl-L-alanyl-D-glutamyl-meso-2,6-diaminopimeloyl-D-alanyl-D-alanine + UDP-N-acetyl-alpha-D-glucosamine = di-trans,octa-cis-undecaprenyl diphospho-[N-acetyl-alpha-D-glucosaminyl-(1-&gt;4)]-N-acetyl-alpha-D-muramoyl-L-alanyl-D-glutamyl-meso-2,6-diaminopimeloyl-D-alanyl-D-alanine + UDP + H(+). The protein operates within cell wall biogenesis; peptidoglycan biosynthesis. Its function is as follows. Cell wall formation. Catalyzes the transfer of a GlcNAc subunit on undecaprenyl-pyrophosphoryl-MurNAc-pentapeptide (lipid intermediate I) to form undecaprenyl-pyrophosphoryl-MurNAc-(pentapeptide)GlcNAc (lipid intermediate II). The polypeptide is UDP-N-acetylglucosamine--N-acetylmuramyl-(pentapeptide) pyrophosphoryl-undecaprenol N-acetylglucosamine transferase (Neisseria meningitidis serogroup B (strain ATCC BAA-335 / MC58)).